The primary structure comprises 138 residues: Large ribosomal subunit protein uL16 (138 aa).

Basic residues predominate over residues 1 to 13 (MLQPSRRKYRKEQ). The interval 1 to 22 (MLQPSRRKYRKEQKGRNTGLAT) is disordered.

Belongs to the universal ribosomal protein uL16 family. In terms of assembly, part of the 50S ribosomal subunit.

In terms of biological role, binds 23S rRNA and is also seen to make contacts with the A and possibly P site tRNAs. In Bordetella petrii (strain ATCC BAA-461 / DSM 12804 / CCUG 43448), this protein is Large ribosomal subunit protein uL16.